The sequence spans 232 residues: tRNA (guanine-N(1)-)-methyltransferase (232 aa).

S-adenosyl-L-methionine contacts are provided by residues Gly-111 and 131–136; that span reads IGDYIL.

Belongs to the RNA methyltransferase TrmD family. Homodimer.

It is found in the cytoplasm. It carries out the reaction guanosine(37) in tRNA + S-adenosyl-L-methionine = N(1)-methylguanosine(37) in tRNA + S-adenosyl-L-homocysteine + H(+). Its function is as follows. Specifically methylates guanosine-37 in various tRNAs. The protein is tRNA (guanine-N(1)-)-methyltransferase of Bartonella quintana (strain Toulouse) (Rochalimaea quintana).